Reading from the N-terminus, the 202-residue chain is uncharacterized protein (202 aa).

This sequence belongs to the NAD(P)H dehydrogenase (quinone) family.

This is an uncharacterized protein from Haemophilus influenzae (strain ATCC 51907 / DSM 11121 / KW20 / Rd).